Consider the following 219-residue polypeptide: Cytidylate kinase (219 aa).

9-17 is a binding site for ATP; that stretch reads GPAGSGKTT.

The protein belongs to the cytidylate kinase family. Type 1 subfamily.

Its subcellular location is the cytoplasm. The enzyme catalyses CMP + ATP = CDP + ADP. It carries out the reaction dCMP + ATP = dCDP + ADP. In Fervidobacterium nodosum (strain ATCC 35602 / DSM 5306 / Rt17-B1), this protein is Cytidylate kinase.